A 145-amino-acid chain; its full sequence is Acidic phospholipase A2 (145 aa).

The N-terminal stretch at Met1–Ser21 is a signal peptide. Positions Ile22–Leu27 are excised as a propeptide. Cystine bridges form between Cys38/Cys98, Cys54/Cys144, Cys56/Cys72, Cys71/Cys125, Cys78/Cys118, Cys87/Cys111, and Cys105/Cys116. Residues Tyr55 and Gly57 each contribute to the Ca(2+) site. His75 is an active-site residue. Asp76 contributes to the Ca(2+) binding site. Asp119 is a catalytic residue.

Belongs to the phospholipase A2 family. Group I subfamily. D49 sub-subfamily. Ca(2+) is required as a cofactor. As to expression, expressed by the venom gland.

It is found in the secreted. The enzyme catalyses a 1,2-diacyl-sn-glycero-3-phosphocholine + H2O = a 1-acyl-sn-glycero-3-phosphocholine + a fatty acid + H(+). PLA2 catalyzes the calcium-dependent hydrolysis of the 2-acyl groups in 3-sn-phosphoglycerides. This chain is Acidic phospholipase A2, found in Notechis scutatus scutatus (Mainland tiger snake).